Here is a 544-residue protein sequence, read N- to C-terminus: Membrane protein insertase YidC (544 aa).

The helical transmembrane segment at 4-24 (KALLALVLSAAVLLIYQIFIY) threads the bilayer. The disordered stretch occupies residues 44–78 (NPAAPVSPQTPADEPSSGSAANPETAAALPVDGTE). 3 consecutive transmembrane segments (helical) span residues 363-383 (NYGI…WPLG), 434-454 (LPMI…LYAI), and 508-528 (PVIF…YWLF).

It belongs to the OXA1/ALB3/YidC family. Type 1 subfamily. Interacts with the Sec translocase complex via SecD. Specifically interacts with transmembrane segments of nascent integral membrane proteins during membrane integration.

It localises to the cell inner membrane. Its function is as follows. Required for the insertion and/or proper folding and/or complex formation of integral membrane proteins into the membrane. Involved in integration of membrane proteins that insert both dependently and independently of the Sec translocase complex, as well as at least some lipoproteins. Aids folding of multispanning membrane proteins. The polypeptide is Membrane protein insertase YidC (Syntrophus aciditrophicus (strain SB)).